Reading from the N-terminus, the 231-residue chain is Large ribosomal subunit protein uL1 (231 aa).

Belongs to the universal ribosomal protein uL1 family. As to quaternary structure, part of the 50S ribosomal subunit.

In terms of biological role, binds directly to 23S rRNA. The L1 stalk is quite mobile in the ribosome, and is involved in E site tRNA release. Functionally, protein L1 is also a translational repressor protein, it controls the translation of the L11 operon by binding to its mRNA. This Pseudomonas savastanoi pv. phaseolicola (strain 1448A / Race 6) (Pseudomonas syringae pv. phaseolicola (strain 1448A / Race 6)) protein is Large ribosomal subunit protein uL1.